The chain runs to 414 residues: CinA-like protein (414 aa).

This sequence belongs to the CinA family.

This is CinA-like protein from Akkermansia muciniphila (strain ATCC BAA-835 / DSM 22959 / JCM 33894 / BCRC 81048 / CCUG 64013 / CIP 107961 / Muc).